A 268-amino-acid polypeptide reads, in one-letter code: Kynurenine formamidase (268 aa).

Residues 33 to 37 (HGGGW) carry the HGGXW motif. S107 (nucleophile) is an active-site residue. Residues D219 and H251 contribute to the active site.

The protein belongs to the kynurenine formamidase family. Homodimer.

The catalysed reaction is N-formyl-L-kynurenine + H2O = L-kynurenine + formate + H(+). It functions in the pathway amino-acid degradation; L-tryptophan degradation via kynurenine pathway; L-kynurenine from L-tryptophan: step 2/2. In terms of biological role, catalyzes the hydrolysis of N-formyl-L-kynurenine to L-kynurenine, the second step in the kynurenine pathway of tryptophan degradation. Kynurenine may be further oxidized to nicotinic acid, NAD(H) and NADP(H). Required for elimination of toxic metabolites. This chain is Kynurenine formamidase, found in Scheffersomyces stipitis (strain ATCC 58785 / CBS 6054 / NBRC 10063 / NRRL Y-11545) (Yeast).